Consider the following 193-residue polypeptide: Bcl-2-like protein 2 (193 aa).

N-acetylalanine is present on Ala2. Positions 9–29 (DTRALVADFVGYKLRQKGYVC) match the BH4 motif. The short motif at 85–104 (ELFQGGPNWGRLVAFFVFGA) is the BH1 element. Positions 136 to 151 (DWIHSSGGWAEFTALY) match the BH2 motif. Ala177 bears the Phosphoserine mark.

The protein belongs to the Bcl-2 family. In terms of assembly, interacts with HIF3A (via C-terminus domain). Interacts with BOP. Expressed (at protein level) in a wide range of tissues with highest levels in brain, spinal cord, testis, pancreas, heart, spleen and mammary glands. Moderate levels found in thymus, ovary and small intestine. Not detected in salivary gland, muscle or liver. Also expressed in cell lines of myeloid, fibroblast and epithelial origin. Not detected in most lymphoid cell lines.

The protein localises to the mitochondrion membrane. Functionally, promotes cell survival. Blocks dexamethasone-induced apoptosis. Mediates survival of postmitotic Sertoli cells by suppressing death-promoting activity of BAX. The sequence is that of Bcl-2-like protein 2 (BCL2L2) from Homo sapiens (Human).